Reading from the N-terminus, the 371-residue chain is Sensor histidine kinase YvfT (371 aa).

At 1-10 (MKKAISIFPK) the chain is on the extracellular side. Residues 11 to 31 (EFGFFPYIFLVYTIMPFLSLL) traverse the membrane as a helical segment. At 32 to 38 (KESGVKQ) the chain is on the cytoplasmic side. The helical transmembrane segment at 39–59 (GIGYGMLLLFVAAYRQLFCSV) threads the bilayer. Over 60–71 (GKASFTYWLIVQ) the chain is Extracellular. Residues 72–92 (MAVILMYSVFYNITYIYLGFF) form a helical membrane-spanning segment. Over 93–109 (PANFVGYYKEKTNFNRA) the chain is Cytoplasmic. Residues 110 to 130 (FCALIFILLFPCLYQFIANSV) form a helical membrane-spanning segment. The Extracellular portion of the chain corresponds to 131–135 (SLREL). A helical membrane pass occupies residues 136 to 156 (FSVLPFLVIMLISPFGIRSMF). Over 157 to 371 (RRIELEAKLA…LTIPLIKKAE (215 aa)) the chain is Cytoplasmic. The Histidine kinase domain occupies 187–368 (DLHDTLGHTL…VVALTIPLIK (182 aa)). Residue His189 is modified to Phosphohistidine; by autocatalysis.

The protein localises to the cell membrane. It carries out the reaction ATP + protein L-histidine = ADP + protein N-phospho-L-histidine.. Its function is as follows. Member of the two-component regulatory system YvfT/YvfU. Probably activates YvfU by phosphorylation. The polypeptide is Sensor histidine kinase YvfT (yvfT) (Bacillus subtilis (strain 168)).